The sequence spans 750 residues: Neprilysin (750 aa).

Over residues 1–14 (MGKSESQMDITDIN) the composition is skewed to polar residues. The disordered stretch occupies residues 1 to 20 (MGKSESQMDITDINTPKPKK). Glycine 2 carries the N-myristoyl glycine lipid modification. Topologically, residues 2-28 (GKSESQMDITDINTPKPKKKQRWTPLE) are cytoplasmic. 2 positions are modified to phosphoserine: serine 4 and serine 6. Positions 16–23 (PKPKKKQR) match the Stop-transfer sequence motif. Residues 29 to 51 (ISLSVLVLLLTIIAVTMIALYAT) form a helical; Signal-anchor for type II membrane protein membrane-spanning segment. The Extracellular portion of the chain corresponds to 52–750 (YDDGICKSSD…MNPEKKCRVW (699 aa)). Positions 56–750 (ICKSSDCIKS…MNPEKKCRVW (695 aa)) constitute a Peptidase M13 domain. Cystine bridges form between cysteine 57–cysteine 62, cysteine 80–cysteine 735, cysteine 88–cysteine 695, cysteine 143–cysteine 411, cysteine 234–cysteine 242, and cysteine 621–cysteine 747. Arginine 103 contributes to the a peptide binding site. N-linked (GlcNAc...) asparagine glycosylation is present at asparagine 145. Residues asparagine 285 and asparagine 325 are each glycosylated (N-linked (GlcNAc...) asparagine). Residue histidine 584 participates in Zn(2+) binding. Residue glutamate 585 is part of the active site. Histidine 588 contributes to the Zn(2+) binding site. N-linked (GlcNAc...) asparagine glycosylation is present at asparagine 628. Residue glutamate 647 coordinates Zn(2+). Catalysis depends on aspartate 651, which acts as the Proton donor.

Belongs to the peptidase M13 family. Zn(2+) serves as cofactor. Myristoylation is a determinant of membrane targeting. In terms of processing, glycosylation at Asn-628 is necessary both for surface expression and neutral endopeptidase activity.

The protein localises to the cell membrane. The catalysed reaction is Preferential cleavage of polypeptides between hydrophobic residues, particularly with Phe or Tyr at P1'.. It carries out the reaction substance P + H2O = substance P(1-9) + L-Leu-L-Met-NH2. The enzyme catalyses substance P + H2O = substance P(1-7) + L-Phe-Gly-L-Leu-L-Met-NH2. It catalyses the reaction neurotensin + H2O = neurotensin(1-11) + L-isoleucyl-L-leucine. The catalysed reaction is neurotensin + H2O = neurotensin(1-10) + L-tyrosyl-L-isoleucyl-L-leucine. Inhibited in a dose dependent manner by opiorphin. Activated by K49-P1-20, a twenty-residue synthetic peptide shortened from the snake B.asper myotoxin II. In terms of biological role, thermolysin-like specificity, but is almost confined on acting on polypeptides of up to 30 amino acids. Biologically important in the destruction of opioid peptides such as Met- and Leu-enkephalins by cleavage of a Gly-Phe bond. Catalyzes cleavage of bradykinin, substance P and neurotensin peptides. Able to cleave angiotensin-1, angiotensin-2 and angiotensin 1-9. Involved in the degradation of atrial natriuretic factor (ANF) and brain natriuretic factor (BNP(1-32)). Displays UV-inducible elastase activity toward skin preelastic and elastic fibers. In Homo sapiens (Human), this protein is Neprilysin.